A 1166-amino-acid chain; its full sequence is Poly [ADP-ribose] polymerase tankyrase-2 (1166 aa).

3 ANK repeats span residues R57 to D89, G90 to N122, and W123 to T155. N203 is subject to (3S)-3-hydroxyasparagine; by HIF1AN; partial. ANK repeat units lie at residues R210 to K242, G243 to L275, W276 to C308, T363 to K398, E399 to N431, and L432 to L464. Residue H238 is modified to (3S)-3-hydroxyhistidine; by HIF1AN; partial. Residue N271 is modified to (3S)-3-hydroxyasparagine; by HIF1AN; partial. N427 is subject to (3S)-3-hydroxyasparagine; by HIF1AN; partial. Residue N518 is modified to (3S)-3-hydroxyasparagine; by HIF1AN; partial. ANK repeat units follow at residues R525–K557, G558–L590, and W591–R623. Positions L545–H553 are HIF1AN-binding. H553 carries the post-translational modification (3S)-3-hydroxyhistidine; by HIF1AN; partial. At N586 the chain carries (3S)-3-hydroxyasparagine; by HIF1AN; partial. A (3S)-3-hydroxyasparagine; by HIF1AN; partial mark is found at N671, N706, and N739. ANK repeat units follow at residues R678 to K710, G711 to K743, and W744 to Q776. A disordered region spans residues G819–S839. The segment covering A822–S839 has biased composition (low complexity). An SAM domain is found at G873–G936. The PARP catalytic domain maps to S959–V1164. Zn(2+) is bound by residues C1081, H1084, C1089, and C1092.

Belongs to the ARTD/PARP family. Oligomerizes and associates with TNKS. Interacts with the cytoplasmic domain of LNPEP/Otase in SLC2A4/GLUT4-vesicles. Binds to the N-terminus of Grb14 and TRF1 with its ankyrin repeat region. Interacts with HIF1AN. Interacts with RNF146; this interaction leads to ubiquitination and proteasomal degradation. Interacts with NUMA1. Ubiquitinated at 'Lys-48' and 'Lys-63' by RNF146 when auto-poly-ADP-ribosylated; this leads to degradation. Deubiquitinated by USP25; leading to stabilization. In terms of processing, ADP-ribosylated (-auto). Poly-ADP-ribosylated protein is recognized by RNF146, followed by ubiquitination. Post-translationally, the crystallographic evidence suggests that the 3-hydroxyhistidine may be the (3S) stereoisomer. Highly expressed in placenta, skeletal muscle, liver, brain, kidney, heart, thymus, spinal cord, lung, peripheral blood leukocytes, pancreas, lymph nodes, spleen, prostate, testis, ovary, small intestine, colon, mammary gland, breast and breast carcinoma, and in common-type meningioma. Highly expressed in fetal liver, heart and brain.

Its subcellular location is the cytoplasm. It is found in the golgi apparatus membrane. It localises to the nucleus. The protein resides in the chromosome. The protein localises to the telomere. The enzyme catalyses NAD(+) + (ADP-D-ribosyl)n-acceptor = nicotinamide + (ADP-D-ribosyl)n+1-acceptor + H(+).. It carries out the reaction L-aspartyl-[protein] + NAD(+) = 4-O-(ADP-D-ribosyl)-L-aspartyl-[protein] + nicotinamide. The catalysed reaction is L-glutamyl-[protein] + NAD(+) = 5-O-(ADP-D-ribosyl)-L-glutamyl-[protein] + nicotinamide. With respect to regulation, specifically inhibited by XAV939, a small molecule, leading to inhibit the Wnt signaling pathway by stabilizing AXIN1 and AXIN2. Inhibited by talazoparib. Its function is as follows. Poly-ADP-ribosyltransferase involved in various processes such as Wnt signaling pathway, telomere length and vesicle trafficking. Acts as an activator of the Wnt signaling pathway by mediating poly-ADP-ribosylation of AXIN1 and AXIN2, 2 key components of the beta-catenin destruction complex: poly-ADP-ribosylated target proteins are recognized by RNF146, which mediates their ubiquitination and subsequent degradation. Also mediates poly-ADP-ribosylation of BLZF1 and CASC3, followed by recruitment of RNF146 and subsequent ubiquitination. Mediates poly-ADP-ribosylation of TERF1, thereby contributing to the regulation of telomere length. Stimulates 26S proteasome activity. This chain is Poly [ADP-ribose] polymerase tankyrase-2, found in Homo sapiens (Human).